We begin with the raw amino-acid sequence, 233 residues long: Cytidylate kinase (233 aa).

15–23 (GPSGAGKSS) is a binding site for ATP. Basic and acidic residues predominate over residues 183–200 (QRDRQDEGREHAPLKQAE). The segment at 183 to 203 (QRDRQDEGREHAPLKQAEDAV) is disordered.

This sequence belongs to the cytidylate kinase family. Type 1 subfamily.

Its subcellular location is the cytoplasm. It carries out the reaction CMP + ATP = CDP + ADP. The enzyme catalyses dCMP + ATP = dCDP + ADP. The chain is Cytidylate kinase from Geobacter sp. (strain M21).